The sequence spans 247 residues: Thioredoxin reductase-like selenoprotein T homolog selt-1.1 (247 aa).

Positions 1–26 (MSRFGVFIIGVLFFMSVCDVLRTVSA) are cleaved as a signal peptide. The cysteines at positions 92 and 95 are disulfide-linked.

It belongs to the SelWTH family. SELT subfamily. As to expression, broadly expressed in neurons of nervous system including ADL, ASH, ASI, ASJ, ASK and AWB amphid sensilla neurons, in epithelial cells including hypodermal, arcade, pharyngeal, vulval and rectal cells, and in somatic muscle cells of the head, neck and body wall, and non-striated pharyngeal muscles.

It localises to the endoplasmic reticulum. The catalysed reaction is [thioredoxin]-dithiol + NADP(+) = [thioredoxin]-disulfide + NADPH + H(+). Probably has thioredoxin reductase-like oxidoreductase activity. Plays a role in regulating the oxidative stress response, and odorant and pathogenic bacteria avoidance behavior. In Caenorhabditis elegans, this protein is Thioredoxin reductase-like selenoprotein T homolog selt-1.1.